The primary structure comprises 357 residues: Protein phosphatase 1 regulatory subunit 42 (357 aa).

LRR repeat units lie at residues 29–50 (KITHINFSDKNIDAIEDLSLCK), 51–72 (NLSVLYLYDNCISQITNLNYAT), 73–94 (NLTHLYLQNNCIPCIENLRSLK), 95–116 (KLEKLYLGGNYIAVIEGLEGLG), 117–138 (ELRELHVENQRLPLGEKLLFDP), 147–168 (SLSILNISNNNIDDIRDLEILE), and 169–190 (NLNQLIAVDNQLLHVKDLEFLL). Residues 204–242 (NPVCLKPKYRDRLILVSKSLEFLDGKEIKNIERQFLMNW) form the LRRCT domain.

In terms of assembly, interacts with PPP1CC isoform gamma-2; the interaction is direct. Interacts with actin, dynein, KIF5B, KIFC1 and tubulin. Associates with microtubules. In terms of processing, phosphorylated; in the testis.

The protein resides in the cytoplasm. The protein localises to the cytoskeleton. It is found in the microtubule organizing center. It localises to the centrosome. Its function is as follows. Regulates phosphatase activity of protein phosphatase 1 (PP1) complexes in the testis. This is Protein phosphatase 1 regulatory subunit 42 (PPP1R42) from Macaca fascicularis (Crab-eating macaque).